The following is a 389-amino-acid chain: 5-amino-6-(D-ribitylamino)uracil--L-tyrosine 4-hydroxyphenyl transferase (389 aa).

Residues 56 to 298 (VSYVINRNIN…QAVARLFFGR (243 aa)) form the Radical SAM core domain. [4Fe-4S] cluster is bound by residues C70, C74, and C77.

The protein belongs to the radical SAM superfamily. CofH family. In terms of assembly, consists of two subunits, CofG and CofH. Requires [4Fe-4S] cluster as cofactor.

It carries out the reaction 5-amino-6-(D-ribitylamino)uracil + L-tyrosine + S-adenosyl-L-methionine = 5-amino-5-(4-hydroxybenzyl)-6-(D-ribitylimino)-5,6-dihydrouracil + 2-iminoacetate + 5'-deoxyadenosine + L-methionine + H(+). It functions in the pathway cofactor biosynthesis; coenzyme F0 biosynthesis. In terms of biological role, catalyzes the radical-mediated synthesis of 5-amino-5-(4-hydroxybenzyl)-6-(D-ribitylimino)-5,6-dihydrouracil from 5-amino-6-(D-ribitylamino)uracil and L-tyrosine. The sequence is that of 5-amino-6-(D-ribitylamino)uracil--L-tyrosine 4-hydroxyphenyl transferase from Gloeobacter violaceus (strain ATCC 29082 / PCC 7421).